The primary structure comprises 159 residues: Putative 4-hydroxy-4-methyl-2-oxoglutarate aldolase (159 aa).

Substrate contacts are provided by residues 75-78 (GDQL) and Arg97. Position 98 (Asp98) interacts with a divalent metal cation.

The protein belongs to the class II aldolase/RraA-like family. In terms of assembly, homotrimer. A divalent metal cation serves as cofactor.

It catalyses the reaction 4-hydroxy-4-methyl-2-oxoglutarate = 2 pyruvate. The catalysed reaction is oxaloacetate + H(+) = pyruvate + CO2. Catalyzes the aldol cleavage of 4-hydroxy-4-methyl-2-oxoglutarate (HMG) into 2 molecules of pyruvate. Also contains a secondary oxaloacetate (OAA) decarboxylase activity due to the common pyruvate enolate transition state formed following C-C bond cleavage in the retro-aldol and decarboxylation reactions. In Aromatoleum aromaticum (strain DSM 19018 / LMG 30748 / EbN1) (Azoarcus sp. (strain EbN1)), this protein is Putative 4-hydroxy-4-methyl-2-oxoglutarate aldolase.